The chain runs to 879 residues: Exocyst complex component 1 (879 aa).

The disordered stretch occupies residues 29-94; that stretch reads SQYSESEYDP…ATSLGNNDGD (66 aa). Positions 40-52 are enriched in basic and acidic residues; sequence ETTHSESDSENHH. The segment covering 64–76 has biased composition (polar residues); sequence FLSQSNDNVSNGP. The span at 77–91 shows a compositional bias: low complexity; the sequence is SNNTLSSSATSLGNN. Coiled coils occupy residues 165-187 and 226-248; these read YNKQ…NKME and KGLK…KLKS. Disordered regions lie at residues 371–413 and 455–557; these read QNDF…GKDG and GQRN…PDAP. A compositionally biased stretch (low complexity) spans 373–409; the sequence is DFFSSSSSSKKSIDSLNNNTSTSTPSKNSSSSSSSSS. Residues 480-500 are compositionally biased toward basic residues; it reads KKSSKKDKKDKKDKKDKKDKK. Over residues 519-532 the composition is skewed to polar residues; that stretch reads DSNSPKSPNNAVNG. Pro residues predominate over residues 541–551; it reads SPPPPPPPPPK.

It belongs to the SEC3 family. As to quaternary structure, the exocyst complex is composed of sec3/exoc1, sec5/exoc2, sec6/exoc3, sec8/exoc4, sec10/exoc5, sec15/exoc6, exo70/exoc7 and exo84/exoc8.

The protein localises to the midbody. It localises to the midbody ring. Component of the exocyst complex involved in the docking of exocytic vesicles with fusion sites on the plasma membrane. The sequence is that of Exocyst complex component 1 (exoc1) from Dictyostelium discoideum (Social amoeba).